A 222-amino-acid polypeptide reads, in one-letter code: Endonuclease V (222 aa).

Mg(2+) contacts are provided by aspartate 34 and aspartate 102.

Belongs to the endonuclease V family. Mg(2+) is required as a cofactor.

The protein resides in the cytoplasm. The catalysed reaction is Endonucleolytic cleavage at apurinic or apyrimidinic sites to products with a 5'-phosphate.. Its function is as follows. DNA repair enzyme involved in the repair of deaminated bases. Selectively cleaves double-stranded DNA at the second phosphodiester bond 3' to a deoxyinosine leaving behind the intact lesion on the nicked DNA. This chain is Endonuclease V, found in Proteus mirabilis (strain HI4320).